The primary structure comprises 88 residues: Putative membrane protein insertion efficiency factor (88 aa).

Residues 65-88 (LDFVPPKKDKNDDSGHTCKAHHHH) are disordered. A compositionally biased stretch (basic and acidic residues) spans 69–80 (PPKKDKNDDSGH).

This sequence belongs to the UPF0161 family.

The protein resides in the cell membrane. Functionally, could be involved in insertion of integral membrane proteins into the membrane. The polypeptide is Putative membrane protein insertion efficiency factor (Listeria innocua serovar 6a (strain ATCC BAA-680 / CLIP 11262)).